A 203-amino-acid polypeptide reads, in one-letter code: Endoplasmic reticulum transmembrane protein 3 (203 aa).

The Lumenal portion of the chain corresponds to 1 to 6; it reads MSLYYT. The chain crosses the membrane as a helical span at residues 7-27; that stretch reads LVFAILVVEIFMFSILALPIP. The Cytoplasmic segment spans residues 28 to 45; sequence SRYRRPLTLLLLKPFKSS. A helical membrane pass occupies residues 46-66; sequence TVQVAIKCVLGFILLLFIDCI. At 67 to 110 the chain is on the lumenal side; it reads NRVYSIDKELQLSSASQNNGAIIAQDRIEVLSRKFFAQRNMYLT. Residues 111–131 form a helical membrane-spanning segment; the sequence is GITLFLTFVVVRTFGLVIELL. The Cytoplasmic portion of the chain corresponds to 132–203; sequence TMKDIYRASP…KSESLQEEIN (72 aa). Positions 142–171 are disordered; that stretch reads PVASSDVKKNDSVTAEAAAQSGASKDDHGD.

It belongs to the BCAP29/BCAP31 family.

The protein resides in the endoplasmic reticulum membrane. Functionally, may play a role in anterograde transport of membrane proteins from the endoplasmic reticulum to the Golgi. May be involved in invertase secretion. The sequence is that of Endoplasmic reticulum transmembrane protein 3 (YET3) from Saccharomyces cerevisiae (strain ATCC 204508 / S288c) (Baker's yeast).